Here is a 66-residue protein sequence, read N- to C-terminus: Large ribosomal subunit protein bL32 (66 aa).

A compositionally biased stretch (basic residues) spans 1–18 (MAIVPKRKTSKQRKHKRR). The tract at residues 1 to 21 (MAIVPKRKTSKQRKHKRRTND) is disordered.

Belongs to the bacterial ribosomal protein bL32 family.

This chain is Large ribosomal subunit protein bL32, found in Mycoplasmopsis agalactiae (strain NCTC 10123 / CIP 59.7 / PG2) (Mycoplasma agalactiae).